A 202-amino-acid polypeptide reads, in one-letter code: Small ribosomal subunit protein uS4c (202 aa).

Residues 13–37 (RRPGVSPGLTSKTLKSKSNYIDRST) are disordered. The span at 20–37 (GLTSKTLKSKSNYIDRST) shows a compositional bias: polar residues. The S4 RNA-binding domain occupies 90–153 (MRLDNTIFRL…ESRSMISKNI (64 aa)).

This sequence belongs to the universal ribosomal protein uS4 family. Part of the 30S ribosomal subunit. Contacts protein S5. The interaction surface between S4 and S5 is involved in control of translational fidelity.

It is found in the plastid. The protein localises to the chloroplast. One of the primary rRNA binding proteins, it binds directly to 16S rRNA where it nucleates assembly of the body of the 30S subunit. Functionally, with S5 and S12 plays an important role in translational accuracy. This chain is Small ribosomal subunit protein uS4c (rps4), found in Takakia lepidozioides (Moss).